A 234-amino-acid polypeptide reads, in one-letter code: MFINSLVPAKLGDVYRGYLLKKKTNESISLGVGTVFIERVFDLVAMISLLFISAYLSFKSDIPKEILYSIKWGVIIILFLIILIFGFLIVNSKINLKNKKLEAILMNFEKGLKAVKLNTLPLLITLSFTGWFIEGLTVYFIFLSLNLNLEILFGVFSDLASSLLTAIPLTPSGLGVVEYALIYILKLKNIDYSGAFAVLILYRLISYFSIVLFGAIMFYIVERNILKEPKNEKY.

5 helical membrane-spanning segments follow: residues valine 32–isoleucine 52, isoleucine 70–valine 90, leucine 123–leucine 143, leucine 164–isoleucine 184, and valine 198–phenylalanine 218.

Belongs to the UPF0104 family.

Its subcellular location is the cell membrane. The polypeptide is UPF0104 membrane protein MJ1078 (Methanocaldococcus jannaschii (strain ATCC 43067 / DSM 2661 / JAL-1 / JCM 10045 / NBRC 100440) (Methanococcus jannaschii)).